Consider the following 64-residue polypeptide: Small ribosomal subunit protein eS17 (64 aa).

This sequence belongs to the eukaryotic ribosomal protein eS17 family.

This Natronomonas pharaonis (strain ATCC 35678 / DSM 2160 / CIP 103997 / JCM 8858 / NBRC 14720 / NCIMB 2260 / Gabara) (Halobacterium pharaonis) protein is Small ribosomal subunit protein eS17.